The chain runs to 292 residues: Acetylglutamate kinase (292 aa).

Residues Gly-64–Gly-65, Arg-86, and Asn-190 each bind substrate.

It belongs to the acetylglutamate kinase family. ArgB subfamily.

It localises to the cytoplasm. It carries out the reaction N-acetyl-L-glutamate + ATP = N-acetyl-L-glutamyl 5-phosphate + ADP. The protein operates within amino-acid biosynthesis; L-arginine biosynthesis; N(2)-acetyl-L-ornithine from L-glutamate: step 2/4. Functionally, catalyzes the ATP-dependent phosphorylation of N-acetyl-L-glutamate. This chain is Acetylglutamate kinase, found in Pelobacter propionicus (strain DSM 2379 / NBRC 103807 / OttBd1).